The following is a 135-amino-acid chain: NADPH-dependent 7-cyano-7-deazaguanine reductase (135 aa).

Residue C48 is the Thioimide intermediate of the active site. Catalysis depends on D55, which acts as the Proton donor. Residues 70 to 72 (IEL) and 89 to 90 (HE) contribute to the substrate site.

This sequence belongs to the GTP cyclohydrolase I family. QueF type 1 subfamily.

It is found in the cytoplasm. The enzyme catalyses 7-aminomethyl-7-carbaguanine + 2 NADP(+) = 7-cyano-7-deazaguanine + 2 NADPH + 3 H(+). It participates in tRNA modification; tRNA-queuosine biosynthesis. Its function is as follows. Catalyzes the NADPH-dependent reduction of 7-cyano-7-deazaguanine (preQ0) to 7-aminomethyl-7-deazaguanine (preQ1). The sequence is that of NADPH-dependent 7-cyano-7-deazaguanine reductase from Prochlorococcus marinus (strain MIT 9303).